The following is a 421-amino-acid chain: Core-capsid bridging protein (421 aa).

The protein belongs to the adenoviridae core-capsid bridging protein family. Monomer. Homodimer. Exists in equilibrium between monomers and dimers in solution. Interacts with the histone-like nucleoprotein; this interactions bridge the virus core to the capsid. Interacts with core protein X; this interactions bridge the virus core to the capsid. Interacts with the endosome lysis protein VI; this interactions bridge the virus core to the capsid. Interacts with the peripentonal hexons. Interacts with host NPM1; this interaction might play a role in virus assembly.

The protein resides in the virion. It localises to the host nucleus. Its subcellular location is the host nucleolus. Functionally, associates loosely with the viral DNA to form an outer shell around the nucleoprotein-DNA complex and links it with the capsid by binding the endosome lysis protein. Dissociates from the viral genome during entry. Might be involved in nuclear capsid assembly of the viral particles through its association with NPM1/nucleophosmin. This Canine adenovirus serotype 1 (strain CLL) (CAdV-1) protein is Core-capsid bridging protein.